The sequence spans 135 residues: Large ribosomal subunit protein bL17 (135 aa).

It belongs to the bacterial ribosomal protein bL17 family. In terms of assembly, part of the 50S ribosomal subunit. Contacts protein L32.

This Listeria monocytogenes serotype 4b (strain CLIP80459) protein is Large ribosomal subunit protein bL17.